A 329-amino-acid chain; its full sequence is Serpentine receptor class alpha-8 (329 aa).

6 helical membrane passes run 26 to 46 (VDLITSFFTYMLSIIAIKMVL), 60 to 80 (FLNIFYANLYQIVYSIDVVVI), 141 to 161 (IFVGSFIAIVVMISTTSTGKL), 187 to 207 (TIHFYISTVVSLFNLAASVAL), 231 to 251 (VIESTETICFLNFTQFVFMFI), and 273 to 293 (FWVVWCYTVPFIALTFPLLLI).

It belongs to the nematode receptor-like protein sra family.

It is found in the membrane. The chain is Serpentine receptor class alpha-8 (sra-8) from Caenorhabditis elegans.